A 465-amino-acid chain; its full sequence is Glutamate--tRNA ligase (465 aa).

The 'HIGH' region motif lies at 5–15; that stretch reads PSPTGMFHVGG. Cys96, Cys98, Cys118, and Asp120 together coordinate Zn(2+). The 'KMSKS' region signature appears at 228–232; sequence KLSKR. Lys231 serves as a coordination point for ATP.

Belongs to the class-I aminoacyl-tRNA synthetase family. Glutamate--tRNA ligase type 1 subfamily. Monomer. Zn(2+) serves as cofactor.

It localises to the cytoplasm. The catalysed reaction is tRNA(Glu) + L-glutamate + ATP = L-glutamyl-tRNA(Glu) + AMP + diphosphate. Catalyzes the attachment of glutamate to tRNA(Glu) in a two-step reaction: glutamate is first activated by ATP to form Glu-AMP and then transferred to the acceptor end of tRNA(Glu). The polypeptide is Glutamate--tRNA ligase (Salinispora tropica (strain ATCC BAA-916 / DSM 44818 / JCM 13857 / NBRC 105044 / CNB-440)).